We begin with the raw amino-acid sequence, 348 residues long: Phosphate acyltransferase (348 aa).

Belongs to the PlsX family. In terms of assembly, homodimer. Probably interacts with PlsY.

The protein localises to the cytoplasm. It carries out the reaction a fatty acyl-[ACP] + phosphate = an acyl phosphate + holo-[ACP]. It participates in lipid metabolism; phospholipid metabolism. In terms of biological role, catalyzes the reversible formation of acyl-phosphate (acyl-PO(4)) from acyl-[acyl-carrier-protein] (acyl-ACP). This enzyme utilizes acyl-ACP as fatty acyl donor, but not acyl-CoA. The protein is Phosphate acyltransferase of Nitrosomonas europaea (strain ATCC 19718 / CIP 103999 / KCTC 2705 / NBRC 14298).